Here is a 504-residue protein sequence, read N- to C-terminus: ATP synthase subunit alpha 1 (504 aa).

Residue 172-179 (GDRQTGKT) participates in ATP binding.

Belongs to the ATPase alpha/beta chains family. F-type ATPases have 2 components, CF(1) - the catalytic core - and CF(0) - the membrane proton channel. CF(1) has five subunits: alpha(3), beta(3), gamma(1), delta(1), epsilon(1). CF(0) has three main subunits: a(1), b(2) and c(9-12). The alpha and beta chains form an alternating ring which encloses part of the gamma chain. CF(1) is attached to CF(0) by a central stalk formed by the gamma and epsilon chains, while a peripheral stalk is formed by the delta and b chains.

The protein resides in the cell inner membrane. The enzyme catalyses ATP + H2O + 4 H(+)(in) = ADP + phosphate + 5 H(+)(out). Produces ATP from ADP in the presence of a proton gradient across the membrane. The alpha chain is a regulatory subunit. The sequence is that of ATP synthase subunit alpha 1 from Rhodopirellula baltica (strain DSM 10527 / NCIMB 13988 / SH1).